The chain runs to 404 residues: Multidrug resistance protein MdtH (404 aa).

Residues 1 to 12 (MSRVSQARNLGK) are Cytoplasmic-facing. Residues 13 to 33 (YFLLIDNMLVVLGFFVVFPLI) traverse the membrane as a helical segment. Residues 34–98 (SIRFVDQMGW…GFATMGIAHE (65 aa)) lie on the Periplasmic side of the membrane. The helical transmembrane segment at 99–116 (PWLLWFSCFLSGLGGTLF) threads the bilayer. At 117 to 138 (DPPRSALVVKLIRPEQRGRFFS) the chain is on the cytoplasmic side. Residues 139–159 (LLMMQDSAGAVIGALLGSWLL) form a helical membrane-spanning segment. The Periplasmic portion of the chain corresponds to 160–164 (QYDFR). A helical membrane pass occupies residues 165 to 185 (LVCAMGAILFIVCAIFNAWLL). Residues 186–213 (PAWKLSTVRTPVREGMRRVISDKRFVTY) lie on the Cytoplasmic side of the membrane. A helical membrane pass occupies residues 214–234 (VLTLAGYYMLAVQVMLMLPIM). Residues 235–243 (VNDVAGSPA) are Periplasmic-facing. A helical membrane pass occupies residues 244–264 (AVKWMYAIEACLSLTLLYPIA). Residues 265-276 (RWSEKRFRLEHR) lie on the Cytoplasmic side of the membrane. The helical transmembrane segment at 277 to 297 (LMAGLLIMSLSMIPIGLAGNL) threads the bilayer. The Periplasmic portion of the chain corresponds to 298-299 (QQ). The chain crosses the membrane as a helical span at residues 300–320 (LFTLICAFYIGSVIAEPARET). The Cytoplasmic portion of the chain corresponds to 321–339 (LSASLTDARARGSYMGFSR). Residues 340-360 (LGLAIGGAIGYIGGGWLFDMG) traverse the membrane as a helical segment. Residues 361-367 (KTLAQPE) lie on the Periplasmic side of the membrane. Residues 368–388 (LPWMMLGIIGFITFLALGWQF) traverse the membrane as a helical segment. The Cytoplasmic portion of the chain corresponds to 389–404 (SHKRTPRQYTGARRLI).

Belongs to the major facilitator superfamily. DHA1 family. MdtH (TC 2.A.1.2.21) subfamily.

It localises to the cell inner membrane. The chain is Multidrug resistance protein MdtH from Salmonella arizonae (strain ATCC BAA-731 / CDC346-86 / RSK2980).